Consider the following 1331-residue polypeptide: ABC multidrug transporter MDR2 (1331 aa).

Basic and acidic residues-rich tracts occupy residues 1–20 (MVEV…KQEN) and 31–41 (SDKEKVAKKGN). The tract at residues 1–51 (MVEVSEKPNTQDDGVSKQENRNPASSSSSTSDKEKVAKKGNSDATKSSTPE) is disordered. 4 helical membrane passes run 93–113 (MIFL…LPLF), 147–167 (YFVY…VGFI), 219–239 (KVGL…IGYV), and 242–262 (WKLA…MGGI). Residues 97 to 387 (AIVSLASIAA…VAPNTQAFAS (291 aa)) enclose the ABC transmembrane type-1 1 domain. Asn293 carries N-linked (GlcNAc...) asparagine glycosylation. Helical transmembrane passes span 325–345 (LGIM…LGFW) and 358–378 (LSAI…IGNV). In terms of domain architecture, ABC transporter 1 spans 422–667 (IEFRGIKHIY…KGTYLQLVEA (246 aa)). Position 457–464 (457–464 (GPSGSGKS)) interacts with ATP. Asn529 carries an N-linked (GlcNAc...) asparagine glycan. 2 consecutive transmembrane segments (helical) span residues 762-782 (LCGF…SVFF) and 810-830 (FLML…IFAI). The ABC transmembrane type-1 2 domain occupies 764–1051 (GFFFAVLSGA…VFSFSPDMGK (288 aa)). An N-linked (GlcNAc...) asparagine glycan is attached at Asn860. Helical transmembrane passes span 884–904 (LGTI…ALAF), 910–930 (LVCI…FWIL), 995–1015 (ASQS…GGLL), and 1025–1045 (FFLC…VFSF). An ABC transporter 2 domain is found at 1086-1324 (IEFRDVHFRY…KGRYYELVHM (239 aa)). A glycan (N-linked (GlcNAc...) asparagine) is linked at Asn1108. Residue 1121–1128 (GPSGCGKS) coordinates ATP.

It belongs to the ABC transporter superfamily. ABCB family. Multidrug resistance exporter (TC 3.A.1.201) subfamily.

It localises to the cell membrane. It carries out the reaction itraconazole(in) + ATP + H2O = itraconazole(out) + ADP + phosphate + H(+). Functionally, pleiotropic ABC efflux transporter that may be involved in the modulation susceptibility to a wide range of unrelated cytotoxic compounds, including terbinafine, 4-nitroquinoline N-oxide, and ethidium bromide. May play a role in pathogenicity. In Trichophyton interdigitale (strain MR816), this protein is ABC multidrug transporter MDR2.